A 680-amino-acid polypeptide reads, in one-letter code: 1-deoxy-D-xylulose-5-phosphate synthase (680 aa).

Residues 1–17 are compositionally biased toward low complexity; that stretch reads MQQSPHSPQSQSLSASA. The disordered stretch occupies residues 1 to 20; that stretch reads MQQSPHSPQSQSLSASAVDS. Thiamine diphosphate-binding positions include His-113 and 154–156; that span reads GHS. Asp-185 contacts Mg(2+). Thiamine diphosphate-binding positions include 186–187, Asn-214, Phe-323, and Glu-408; that span reads GA. Asn-214 is a binding site for Mg(2+).

It belongs to the transketolase family. DXPS subfamily. In terms of assembly, homodimer. Mg(2+) is required as a cofactor. It depends on thiamine diphosphate as a cofactor.

It catalyses the reaction D-glyceraldehyde 3-phosphate + pyruvate + H(+) = 1-deoxy-D-xylulose 5-phosphate + CO2. Its pathway is metabolic intermediate biosynthesis; 1-deoxy-D-xylulose 5-phosphate biosynthesis; 1-deoxy-D-xylulose 5-phosphate from D-glyceraldehyde 3-phosphate and pyruvate: step 1/1. In terms of biological role, catalyzes the acyloin condensation reaction between C atoms 2 and 3 of pyruvate and glyceraldehyde 3-phosphate to yield 1-deoxy-D-xylulose-5-phosphate (DXP). This Psychrobacter cryohalolentis (strain ATCC BAA-1226 / DSM 17306 / VKM B-2378 / K5) protein is 1-deoxy-D-xylulose-5-phosphate synthase.